The chain runs to 274 residues: UPF0758 protein RHE_CH01848 (274 aa).

The disordered stretch occupies residues 1–37 (MAKGPVATSSDDELPFETEEPVADERSFFGGRPQKPA). Residues 10-22 (SDDELPFETEEPV) show a composition bias toward acidic residues. In terms of domain architecture, MPN spans 152–274 (VLSSWSSVIQ…HVSLKGLKLI (123 aa)). Residues His223, His225, and Asp236 each coordinate Zn(2+). Positions 223-236 (HNHPSGDPTPSRAD) match the JAMM motif motif.

The protein belongs to the UPF0758 family.

The polypeptide is UPF0758 protein RHE_CH01848 (Rhizobium etli (strain ATCC 51251 / DSM 11541 / JCM 21823 / NBRC 15573 / CFN 42)).